The primary structure comprises 221 residues: Ribosomal RNA small subunit methyltransferase G (221 aa).

S-adenosyl-L-methionine contacts are provided by residues glycine 89, leucine 94, 140–141, and arginine 154; that span reads VE.

The protein belongs to the methyltransferase superfamily. RNA methyltransferase RsmG family.

The protein localises to the cytoplasm. The enzyme catalyses guanosine(527) in 16S rRNA + S-adenosyl-L-methionine = N(7)-methylguanosine(527) in 16S rRNA + S-adenosyl-L-homocysteine. Its function is as follows. Specifically methylates the N7 position of guanine in position 527 of 16S rRNA. The polypeptide is Ribosomal RNA small subunit methyltransferase G (Methylibium petroleiphilum (strain ATCC BAA-1232 / LMG 22953 / PM1)).